Here is a 472-residue protein sequence, read N- to C-terminus: Alkaline phosphatase (472 aa).

A signal peptide spans 1–21 (MKQSAIALALLSCLITPVSQA). Asp74 provides a ligand contact to Mg(2+). A Zn(2+)-binding site is contributed by Asp74. The active-site Phosphoserine intermediate is Ser125. 2 residues coordinate Mg(2+): Asp176 and Thr178. 2 disulfides stabilise this stretch: Cys191-Cys201 and Cys309-Cys359. Glu345 is a binding site for Mg(2+). Zn(2+)-binding residues include Asp350, His354, Asp392, His393, and His435.

It belongs to the alkaline phosphatase family. In terms of assembly, homodimer. The cofactor is Mg(2+). Requires Zn(2+) as cofactor.

It is found in the periplasm. The catalysed reaction is a phosphate monoester + H2O = an alcohol + phosphate. The protein is Alkaline phosphatase (phoA) of Escherichia fergusonii (strain ATCC 35469 / DSM 13698 / CCUG 18766 / IAM 14443 / JCM 21226 / LMG 7866 / NBRC 102419 / NCTC 12128 / CDC 0568-73).